Reading from the N-terminus, the 365-residue chain is Anhydro-N-acetylmuramic acid kinase (365 aa).

Position 12–19 (12–19 (GTSMDGMD)) interacts with ATP.

It belongs to the anhydro-N-acetylmuramic acid kinase family.

The enzyme catalyses 1,6-anhydro-N-acetyl-beta-muramate + ATP + H2O = N-acetyl-D-muramate 6-phosphate + ADP + H(+). Its pathway is amino-sugar metabolism; 1,6-anhydro-N-acetylmuramate degradation. The protein operates within cell wall biogenesis; peptidoglycan recycling. In terms of biological role, catalyzes the specific phosphorylation of 1,6-anhydro-N-acetylmuramic acid (anhMurNAc) with the simultaneous cleavage of the 1,6-anhydro ring, generating MurNAc-6-P. Is required for the utilization of anhMurNAc either imported from the medium or derived from its own cell wall murein, and thus plays a role in cell wall recycling. The protein is Anhydro-N-acetylmuramic acid kinase of Pseudomonas paraeruginosa (strain DSM 24068 / PA7) (Pseudomonas aeruginosa (strain PA7)).